Reading from the N-terminus, the 168-residue chain is Chorismate pyruvate-lyase (168 aa).

Met-36, Arg-78, Leu-116, and Glu-157 together coordinate substrate.

It belongs to the UbiC family. As to quaternary structure, monomer.

The protein resides in the cytoplasm. It carries out the reaction chorismate = 4-hydroxybenzoate + pyruvate. The protein operates within cofactor biosynthesis; ubiquinone biosynthesis. In terms of biological role, removes the pyruvyl group from chorismate, with concomitant aromatization of the ring, to provide 4-hydroxybenzoate (4HB) for the ubiquinone pathway. In Photorhabdus laumondii subsp. laumondii (strain DSM 15139 / CIP 105565 / TT01) (Photorhabdus luminescens subsp. laumondii), this protein is Chorismate pyruvate-lyase.